The following is a 50-amino-acid chain: Protein PsbN (50 aa).

The chain crosses the membrane as a helical span at residues 14–34 (VAVTILAILLALTGFGLWTAF).

The protein belongs to the PsbN family.

Its subcellular location is the cellular thylakoid membrane. In terms of biological role, may play a role in photosystem I and II biogenesis. This Prochlorococcus marinus (strain MIT 9312) protein is Protein PsbN.